Reading from the N-terminus, the 1493-residue chain is Mediator of RNA polymerase II transcription subunit 14 (1493 aa).

6 disordered regions span residues 1–51 (MPSS…YHAA), 71–110 (MIGV…SAKG), 408–427 (TEQG…APTV), 674–693 (QRPR…RSAS), 894–913 (EAGT…NDVD), and 957–997 (GSNT…SSDD). The span at 90 to 100 (PDSKQSSDADG) shows a compositional bias: basic and acidic residues.

Belongs to the Mediator complex subunit 14 family. Component of the Mediator complex.

Its subcellular location is the nucleus. Its function is as follows. Component of the Mediator complex, a coactivator involved in the regulated transcription of nearly all RNA polymerase II-dependent genes. Mediator functions as a bridge to convey information from gene-specific regulatory proteins to the basal RNA polymerase II transcription machinery. Mediator is recruited to promoters by direct interactions with regulatory proteins and serves as a scaffold for the assembly of a functional preinitiation complex with RNA polymerase II and the general transcription factors. The protein is Mediator of RNA polymerase II transcription subunit 14 (RGR1) of Mycosarcoma maydis (Corn smut fungus).